Reading from the N-terminus, the 219-residue chain is Transmembrane protein 125 (219 aa).

Transmembrane regions (helical) follow at residues 36-56, 68-88, 114-134, and 147-167; these read LCFV…VALL, LATG…QLMS, ALVV…LAGL, and MLSV…GLLL.

Its subcellular location is the membrane. This Homo sapiens (Human) protein is Transmembrane protein 125 (TMEM125).